We begin with the raw amino-acid sequence, 130 residues long: Galectin-2 (130 aa).

In terms of domain architecture, Galectin spans 4-130 (KFEVKDLNMK…GLQISSFKLE (127 aa)). 65-71 (WGQEQRE) is a binding site for a beta-D-galactoside.

As to quaternary structure, homodimer.

Functionally, this protein binds beta-galactoside. Its physiological function is not yet known. The sequence is that of Galectin-2 (Lgals2) from Mus musculus (Mouse).